The chain runs to 575 residues: DNA-directed RNA polymerase subunit beta' (575 aa).

It belongs to the RNA polymerase beta' chain family. In terms of assembly, in plastids the minimal PEP RNA polymerase catalytic core is composed of four subunits: alpha, beta, beta', and beta''. When a (nuclear-encoded) sigma factor is associated with the core the holoenzyme is formed, which can initiate transcription.

It is found in the plastid. Its subcellular location is the apicoplast. The enzyme catalyses RNA(n) + a ribonucleoside 5'-triphosphate = RNA(n+1) + diphosphate. Functionally, DNA-dependent RNA polymerase catalyzes the transcription of DNA into RNA using the four ribonucleoside triphosphates as substrates. The protein is DNA-directed RNA polymerase subunit beta' (rpoC1) of Plasmodium falciparum (isolate 3D7).